Consider the following 82-residue polypeptide: ATP synthase subunit c, chloroplastic (82 aa).

2 consecutive transmembrane segments (helical) span residues 3–23 and 57–77; these read PLIAAASVVAAGLSVGLAAIG and FAFMESLTIYGLVVALALLFA.

It belongs to the ATPase C chain family. In terms of assembly, F-type ATPases have 2 components, F(1) - the catalytic core - and F(0) - the membrane proton channel. F(1) has five subunits: alpha(3), beta(3), gamma(1), delta(1), epsilon(1). F(0) has four main subunits: a(1), b(1), b'(1) and c(10-14). The alpha and beta chains form an alternating ring which encloses part of the gamma chain. F(1) is attached to F(0) by a central stalk formed by the gamma and epsilon chains, while a peripheral stalk is formed by the delta, b and b' chains.

It is found in the plastid. The protein localises to the chloroplast thylakoid membrane. In terms of biological role, f(1)F(0) ATP synthase produces ATP from ADP in the presence of a proton or sodium gradient. F-type ATPases consist of two structural domains, F(1) containing the extramembraneous catalytic core and F(0) containing the membrane proton channel, linked together by a central stalk and a peripheral stalk. During catalysis, ATP synthesis in the catalytic domain of F(1) is coupled via a rotary mechanism of the central stalk subunits to proton translocation. Key component of the F(0) channel; it plays a direct role in translocation across the membrane. A homomeric c-ring of between 10-14 subunits forms the central stalk rotor element with the F(1) delta and epsilon subunits. In Oltmannsiellopsis viridis (Marine flagellate), this protein is ATP synthase subunit c, chloroplastic.